We begin with the raw amino-acid sequence, 311 residues long: Vomeronasal type-1 receptor 3 (311 aa).

Residues 1–5 (MASKD) lie on the Extracellular side of the membrane. A helical membrane pass occupies residues 6 to 26 (FAIGMILLSQIMVGFLGNFFL). Residues 27 to 51 (LYHYSFLCFTRGMLQSTDLILKHLT) are Cytoplasmic-facing. A helical membrane pass occupies residues 52–72 (IANSLVILSKGIPQTMAAFGL). The Extracellular portion of the chain corresponds to 73 to 92 (KDSLSDIGCKFVFYVHRVGR). Residues 93-113 (AVCVGNACLLSVFQVITISPS) form a helical membrane-spanning segment. The Cytoplasmic segment spans residues 114-130 (EFRWAELKLHAHKYIRS). A helical transmembrane segment spans residues 131 to 151 (FILVLCWILNTLVNITVLLHV). Residues 152-187 (TGKWNSINSTKTNDYGYCSGGSRSRIPHSLHIVLLS) lie on the Extracellular side of the membrane. The N-linked (GlcNAc...) asparagine glycan is linked to Asn159. The helical transmembrane segment at 188–208 (SLDVLCLGLMTLASGSMVFIL) threads the bilayer. Topologically, residues 209–232 (HRHKQQVQHIHGTNLSARSSPESR) are cytoplasmic. A helical membrane pass occupies residues 233–249 (VTQSILVLVSTLCYFTR). Over 250-264 (SPPSLHMSLFPNPSW) the chain is Extracellular. Residues 265–285 (WLLNTSALITACFPMVSPFVL) form a helical membrane-spanning segment. Topologically, residues 286-311 (MSRHPRIPRLGSACCGRNPQFPKLVR) are cytoplasmic.

This sequence belongs to the G-protein coupled receptor 1 family.

Its subcellular location is the cell membrane. In terms of biological role, putative pheromone receptor. This chain is Vomeronasal type-1 receptor 3 (VN1R3), found in Homo sapiens (Human).